Consider the following 114-residue polypeptide: Large ribosomal subunit protein bL20c (114 aa).

The protein belongs to the bacterial ribosomal protein bL20 family.

Its subcellular location is the plastid. The protein resides in the chloroplast. Its function is as follows. Binds directly to 23S ribosomal RNA and is necessary for the in vitro assembly process of the 50S ribosomal subunit. It is not involved in the protein synthesizing functions of that subunit. The sequence is that of Large ribosomal subunit protein bL20c from Tetradesmus obliquus (Green alga).